The chain runs to 509 residues: uncharacterized protein (509 aa).

Residues 108–225 (GKSSLCNLLA…KRHKPLFPVI (118 aa)) form the G domain.

This is an uncharacterized protein from Acinetobacter baylyi (strain ATCC 33305 / BD413 / ADP1).